We begin with the raw amino-acid sequence, 494 residues long: Aldehyde dehydrogenase family 7 member A1 (494 aa).

247–252 is a binding site for NAD(+); that stretch reads GSSKVG. The active-site Proton acceptor is E269. C303 functions as the Nucleophile in the catalytic mechanism.

This sequence belongs to the aldehyde dehydrogenase family. In terms of assembly, homotetramer.

It catalyses the reaction an aldehyde + NAD(+) + H2O = a carboxylate + NADH + 2 H(+). This Brassica napus (Rape) protein is Aldehyde dehydrogenase family 7 member A1 (BTG-26).